The primary structure comprises 92 residues: DNA-directed RNA polymerase subunit omega (92 aa).

Belongs to the RNA polymerase subunit omega family. The RNAP catalytic core consists of 2 alpha, 1 beta, 1 beta' and 1 omega subunit. When a sigma factor is associated with the core the holoenzyme is formed, which can initiate transcription.

The enzyme catalyses RNA(n) + a ribonucleoside 5'-triphosphate = RNA(n+1) + diphosphate. In terms of biological role, promotes RNA polymerase assembly. Latches the N- and C-terminal regions of the beta' subunit thereby facilitating its interaction with the beta and alpha subunits. This Shewanella sp. (strain ANA-3) protein is DNA-directed RNA polymerase subunit omega.